The sequence spans 140 residues: Acyl-coenzyme A thioesterase 13 (140 aa).

N-acetylmethionine is present on Met-1. N6-acetyllysine is present on residues Lys-27, Lys-37, and Lys-43. A CoA-binding site is contributed by Glu-46. Asn-50 and Gly-81 together coordinate substrate. CoA-binding positions include Ser-83, 90–95 (YMSPAK), and 108–113 (KQGKTL). N6-acetyllysine is present on residues Lys-108 and Lys-127. Residue His-137 coordinates CoA.

It belongs to the thioesterase PaaI family. Homotetramer. Interacts with PCTP. In terms of tissue distribution, highly expressed in the kidney and moderately in the heart, liver, brain, small and large intestine. Also expressed in brown adipose tissue.

It localises to the cytoplasm. It is found in the cytosol. Its subcellular location is the mitochondrion. The protein localises to the nucleus. The protein resides in the cytoskeleton. It localises to the spindle. It catalyses the reaction a fatty acyl-CoA + H2O = a fatty acid + CoA + H(+). The enzyme catalyses decanoyl-CoA + H2O = decanoate + CoA + H(+). It carries out the reaction octanoyl-CoA + H2O = octanoate + CoA + H(+). The catalysed reaction is butanoyl-CoA + H2O = butanoate + CoA + H(+). It catalyses the reaction hexanoyl-CoA + H2O = hexanoate + CoA + H(+). The enzyme catalyses tetradecanoyl-CoA + H2O = tetradecanoate + CoA + H(+). It carries out the reaction hexadecanoyl-CoA + H2O = hexadecanoate + CoA + H(+). The catalysed reaction is dodecanoyl-CoA + H2O = dodecanoate + CoA + H(+). It catalyses the reaction (9Z)-octadecenoyl-CoA + H2O = (9Z)-octadecenoate + CoA + H(+). In terms of biological role, catalyzes the hydrolysis of acyl-CoAs into free fatty acids and coenzyme A (CoASH), regulating their respective intracellular levels. Has acyl-CoA thioesterase activity towards medium (C12) and long-chain (C18) fatty acyl-CoA substrates. Can also hydrolyze 3-hydroxyphenylacetyl-CoA and 3,4-dihydroxyphenylacetyl-CoA (in vitro). May play a role in controlling adaptive thermogenesis. This is Acyl-coenzyme A thioesterase 13 from Mus musculus (Mouse).